We begin with the raw amino-acid sequence, 623 residues long: Methionine--tRNA ligase (623 aa).

Positions 11-21 (PYANGPRHIGH) match the 'HIGH' region motif. Residues C143, C146, C156, and C159 each contribute to the Zn(2+) site. Residues 347 to 351 (KFSSS) carry the 'KMSKS' region motif. An ATP-binding site is contributed by S350.

Belongs to the class-I aminoacyl-tRNA synthetase family. MetG type 1 subfamily. As to quaternary structure, monomer. Requires Zn(2+) as cofactor.

The protein resides in the cytoplasm. It catalyses the reaction tRNA(Met) + L-methionine + ATP = L-methionyl-tRNA(Met) + AMP + diphosphate. Is required not only for elongation of protein synthesis but also for the initiation of all mRNA translation through initiator tRNA(fMet) aminoacylation. This Bifidobacterium animalis subsp. lactis (strain AD011) protein is Methionine--tRNA ligase.